We begin with the raw amino-acid sequence, 129 residues long: Small ribosomal subunit protein uS8 (129 aa).

Belongs to the universal ribosomal protein uS8 family. In terms of assembly, part of the 30S ribosomal subunit. Contacts proteins S5 and S12.

Functionally, one of the primary rRNA binding proteins, it binds directly to 16S rRNA central domain where it helps coordinate assembly of the platform of the 30S subunit. In Mycoplasma capricolum subsp. capricolum (strain California kid / ATCC 27343 / NCTC 10154), this protein is Small ribosomal subunit protein uS8.